Here is a 1400-residue protein sequence, read N- to C-terminus: DNA-directed RNA polymerase subunit beta' (1400 aa).

Residues cysteine 70, cysteine 72, cysteine 85, and cysteine 88 each contribute to the Zn(2+) site. Mg(2+)-binding residues include aspartate 460, aspartate 462, and aspartate 464. 4 residues coordinate Zn(2+): cysteine 814, cysteine 889, cysteine 896, and cysteine 899.

Belongs to the RNA polymerase beta' chain family. As to quaternary structure, the RNAP catalytic core consists of 2 alpha, 1 beta, 1 beta' and 1 omega subunit. When a sigma factor is associated with the core the holoenzyme is formed, which can initiate transcription. It depends on Mg(2+) as a cofactor. The cofactor is Zn(2+).

The catalysed reaction is RNA(n) + a ribonucleoside 5'-triphosphate = RNA(n+1) + diphosphate. Functionally, DNA-dependent RNA polymerase catalyzes the transcription of DNA into RNA using the four ribonucleoside triphosphates as substrates. The polypeptide is DNA-directed RNA polymerase subunit beta' (Alcanivorax borkumensis (strain ATCC 700651 / DSM 11573 / NCIMB 13689 / SK2)).